The chain runs to 486 residues: Surface lipoprotein assembly modifier (486 aa).

The first 29 residues, Met-1 to Ala-29, serve as a signal peptide directing secretion. Residues Lys-30–Asn-197 form an N-terminal domain region. Residues Gln-198–Phe-486 form a C-terminal probable beta barrel region. The next 14 beta stranded transmembrane spans lie at Trp-199–Asn-209, Gly-237–Pro-248, Phe-253–Asn-262, Thr-276–Gln-286, Val-290–Lys-300, Leu-320–Leu-330, Trp-334–Glu-344, Tyr-358–Leu-367, Phe-373–Arg-382, Lys-395–Asp-404, Ile-409–Asn-419, Tyr-437–Arg-446, Leu-453–Lys-463, and Asn-476–Phe-486.

It belongs to the Slam family.

Its subcellular location is the cell outer membrane. Functionally, required for correct export to the cell surface of some cell outer membrane lipoproteins (tested with TpbP) upon heterologous expression in E.coli and probably also in Haemophilus. The protein is Surface lipoprotein assembly modifier of Haemophilus influenzae (strain 86-028NP).